A 333-amino-acid chain; its full sequence is MFRAAAPGQLRRAASLLRFQSTLVIAEHANDSLAPITLNTITAAGRLGGEVSCLVAGTKCDKVVQDLCKVAGVAKVLVAQHDAYKGLLPEELTPLILETQKQFSYTHICAGASAFGKNLLPRVAAKLNVAPVSDIIEIKSPDTFVRTIYAGNALCTVKCDEKVKVFSVRGTSFEAAATSGGSASSEKAPSSSSVGISEWLDQKLTKSDRPELTGAKVVVSGGRGLKSGENFKLLYDLADQLHAAVGASRAAVDAGFVPNDMQVGQTGKIVAPELYIAVGISGAIQHLAGMKDSKTIVAINKDPEAPIFQVADYGIVADLFKVVPEMTEILKKK.

A mitochondrion-targeting transit peptide spans 1 to 19; it reads MFRAAAPGQLRRAASLLRF. Residues 20-204 are domain I; that stretch reads QSTLVIAEHA…GISEWLDQKL (185 aa). Lysine 59 carries the post-translational modification N6-acetyllysine; alternate. Residue lysine 59 is modified to N6-succinyllysine; alternate. N6-acetyllysine is present on lysine 62. Lysine 69 carries the N6-acetyllysine; alternate modification. Lysine 69 is subject to N6-succinyllysine; alternate. At lysine 75 the chain carries N6-acetyllysine. At lysine 85 the chain carries N6-acetyllysine; alternate. Lysine 85 bears the N6-succinyllysine; alternate mark. A Phosphothreonine modification is found at threonine 93. N6-acetyllysine occurs at positions 101 and 139. A Phosphoserine modification is found at serine 140. The residue at position 158 (lysine 158) is an N6-acetyllysine; alternate. N6-succinyllysine; alternate is present on lysine 158. Lysine 164 carries the N6-acetyllysine modification. Position 187 is an N6-succinyllysine (lysine 187). An N6-acetyllysine; alternate modification is found at lysine 203. Lysine 203 is subject to N6-succinyllysine; alternate. Positions 205–333 are domain II; the sequence is TKSDRPELTG…PEMTEILKKK (129 aa). Lysine 216 bears the N6-succinyllysine mark. FAD is bound at residue arginine 223. 2 positions are modified to N6-acetyllysine; alternate: lysine 226 and lysine 232. An N6-succinyllysine; alternate mark is found at lysine 226 and lysine 232. Residues serine 248, 263–266, 281–286, and asparagine 300 each bind FAD; these read VGQT and SGAIQH. Lysine 301 is subject to N6-succinyllysine. 318 to 319 serves as a coordination point for FAD; it reads DL.

Belongs to the ETF alpha-subunit/FixB family. Heterodimer composed of ETFA and ETFB. Identified in a complex that contains ETFA, ETFB and ETFRF1. Interaction with ETFRF1 promotes dissociation of the bound FAD and loss of electron transfer activity. Interacts with TASOR. FAD is required as a cofactor. Expressed in the spermatogonia, spermatocytes, ovary and granular cells within the cerebellum.

It is found in the mitochondrion matrix. Functionally, heterodimeric electron transfer flavoprotein that accepts electrons from several mitochondrial dehydrogenases, including acyl-CoA dehydrogenases, glutaryl-CoA and sarcosine dehydrogenase. It transfers the electrons to the main mitochondrial respiratory chain via ETF-ubiquinone oxidoreductase (ETF dehydrogenase). Required for normal mitochondrial fatty acid oxidation and normal amino acid metabolism. In Mus musculus (Mouse), this protein is Electron transfer flavoprotein subunit alpha, mitochondrial (Etfa).